The following is a 105-amino-acid chain: Large ribosomal subunit protein bL21 (105 aa).

The protein belongs to the bacterial ribosomal protein bL21 family. As to quaternary structure, part of the 50S ribosomal subunit. Contacts protein L20.

Its function is as follows. This protein binds to 23S rRNA in the presence of protein L20. The protein is Large ribosomal subunit protein bL21 of Dictyoglomus thermophilum (strain ATCC 35947 / DSM 3960 / H-6-12).